A 305-amino-acid chain; its full sequence is 2-oxoacid:ferredoxin oxidoreductase subunit beta (305 aa).

The [4Fe-4S] cluster site is built by cysteine 12, cysteine 15, and cysteine 46. Thiamine diphosphate is bound by residues 44–47 and histidine 65; that span reads IGCS. Aspartate 90 is a Mg(2+) binding site. 91–92 serves as a coordination point for thiamine diphosphate; that stretch reads GD. Asparagine 118 and valine 120 together coordinate Mg(2+). Position 122-123 (122-123) interacts with thiamine diphosphate; the sequence is GL. Residue cysteine 197 participates in [4Fe-4S] cluster binding.

In terms of assembly, heterodimer composed of an alpha and a beta subunit. The cofactor is [4Fe-4S] cluster. Thiamine diphosphate serves as cofactor. Requires Mg(2+) as cofactor.

It catalyses the reaction a 2-oxocarboxylate + 2 oxidized [2Fe-2S]-[ferredoxin] + CoA = an acyl-CoA + 2 reduced [2Fe-2S]-[ferredoxin] + CO2 + H(+). Functionally, catalyzes the coenzyme A-dependent oxidative decarboxylation of different 2-oxoacids such as 2-oxoglutarate, pyruvate and 2-oxobutyrate to form their CoA derivatives. This chain is 2-oxoacid:ferredoxin oxidoreductase subunit beta, found in Saccharolobus solfataricus (Sulfolobus solfataricus).